A 198-amino-acid chain; its full sequence is Recombination protein RecR (198 aa).

The C4-type zinc-finger motif lies at 57–72 (CSVCGNLTDEDPCSIC). The region spanning 80–175 (SMILVVEDSK…KVTRLARGLA (96 aa)) is the Toprim domain.

The protein belongs to the RecR family.

May play a role in DNA repair. It seems to be involved in an RecBC-independent recombinational process of DNA repair. It may act with RecF and RecO. In Streptococcus uberis (strain ATCC BAA-854 / 0140J), this protein is Recombination protein RecR.